We begin with the raw amino-acid sequence, 264 residues long: tRNA (guanine-N(1)-)-methyltransferase (264 aa).

S-adenosyl-L-methionine is bound by residues G125 and 145–150 (LGDFVL).

Belongs to the RNA methyltransferase TrmD family. Homodimer.

The protein localises to the cytoplasm. It carries out the reaction guanosine(37) in tRNA + S-adenosyl-L-methionine = N(1)-methylguanosine(37) in tRNA + S-adenosyl-L-homocysteine + H(+). Its function is as follows. Specifically methylates guanosine-37 in various tRNAs. This Burkholderia ambifaria (strain ATCC BAA-244 / DSM 16087 / CCUG 44356 / LMG 19182 / AMMD) (Burkholderia cepacia (strain AMMD)) protein is tRNA (guanine-N(1)-)-methyltransferase.